The sequence spans 131 residues: D-ribose pyranase (131 aa).

His20 (proton donor) is an active-site residue. Residues Asp28, His98, and 120 to 122 (YAN) contribute to the substrate site.

The protein belongs to the RbsD / FucU family. RbsD subfamily. In terms of assembly, homodecamer.

The protein localises to the cytoplasm. It catalyses the reaction beta-D-ribopyranose = beta-D-ribofuranose. Its pathway is carbohydrate metabolism; D-ribose degradation; D-ribose 5-phosphate from beta-D-ribopyranose: step 1/2. Catalyzes the interconversion of beta-pyran and beta-furan forms of D-ribose. The sequence is that of D-ribose pyranase from Clostridium botulinum (strain Eklund 17B / Type B).